The sequence spans 566 residues: Arginine--tRNA ligase (566 aa).

The 'HIGH' region motif lies at 121-131 (PNIAKPMSMGH).

The protein belongs to the class-I aminoacyl-tRNA synthetase family. Monomer.

It localises to the cytoplasm. It catalyses the reaction tRNA(Arg) + L-arginine + ATP = L-arginyl-tRNA(Arg) + AMP + diphosphate. The chain is Arginine--tRNA ligase from Oenococcus oeni (strain ATCC BAA-331 / PSU-1).